Here is a 208-residue protein sequence, read N- to C-terminus: Thiamine-phosphate synthase (208 aa).

4-amino-2-methyl-5-(diphosphooxymethyl)pyrimidine contacts are provided by residues Gln37–Arg39 and Asn70. The Mg(2+) site is built by Asp71 and Asp90. Thr109 lines the 4-amino-2-methyl-5-(diphosphooxymethyl)pyrimidine pocket. A 2-[(2R,5Z)-2-carboxy-4-methylthiazol-5(2H)-ylidene]ethyl phosphate-binding site is contributed by Thr135–Ser137. Lys138 contacts 4-amino-2-methyl-5-(diphosphooxymethyl)pyrimidine. Gly166 contributes to the 2-[(2R,5Z)-2-carboxy-4-methylthiazol-5(2H)-ylidene]ethyl phosphate binding site.

The protein belongs to the thiamine-phosphate synthase family. It depends on Mg(2+) as a cofactor.

The catalysed reaction is 2-[(2R,5Z)-2-carboxy-4-methylthiazol-5(2H)-ylidene]ethyl phosphate + 4-amino-2-methyl-5-(diphosphooxymethyl)pyrimidine + 2 H(+) = thiamine phosphate + CO2 + diphosphate. It carries out the reaction 2-(2-carboxy-4-methylthiazol-5-yl)ethyl phosphate + 4-amino-2-methyl-5-(diphosphooxymethyl)pyrimidine + 2 H(+) = thiamine phosphate + CO2 + diphosphate. The enzyme catalyses 4-methyl-5-(2-phosphooxyethyl)-thiazole + 4-amino-2-methyl-5-(diphosphooxymethyl)pyrimidine + H(+) = thiamine phosphate + diphosphate. The protein operates within cofactor biosynthesis; thiamine diphosphate biosynthesis; thiamine phosphate from 4-amino-2-methyl-5-diphosphomethylpyrimidine and 4-methyl-5-(2-phosphoethyl)-thiazole: step 1/1. Functionally, condenses 4-methyl-5-(beta-hydroxyethyl)thiazole monophosphate (THZ-P) and 2-methyl-4-amino-5-hydroxymethyl pyrimidine pyrophosphate (HMP-PP) to form thiamine monophosphate (TMP). The sequence is that of Thiamine-phosphate synthase from Salinispora arenicola (strain CNS-205).